The following is a 316-amino-acid chain: Small ribosomal subunit biogenesis GTPase RsgA (316 aa).

A disordered region spans residues 1-20 (MSKLSHQQQRRIHNHRQNKL). Over residues 8–18 (QQRRIHNHRQN) the composition is skewed to basic residues. The 160-residue stretch at 92 to 251 (AGKLKPVASN…IIDTPGVRGF (160 aa)) folds into the CP-type G domain. GTP-binding positions include 139 to 142 (NKSD) and 193 to 201 (GQSGVGKSS). Zn(2+)-binding residues include Cys-275, Cys-280, His-282, and Cys-288.

The protein belongs to the TRAFAC class YlqF/YawG GTPase family. RsgA subfamily. Monomer. Associates with 30S ribosomal subunit, binds 16S rRNA. Zn(2+) serves as cofactor.

It localises to the cytoplasm. In terms of biological role, one of several proteins that assist in the late maturation steps of the functional core of the 30S ribosomal subunit. Helps release RbfA from mature subunits. May play a role in the assembly of ribosomal proteins into the subunit. Circularly permuted GTPase that catalyzes slow GTP hydrolysis, GTPase activity is stimulated by the 30S ribosomal subunit. The chain is Small ribosomal subunit biogenesis GTPase RsgA from Dichelobacter nodosus (strain VCS1703A).